The following is a 269-amino-acid chain: Indole-3-glycerol phosphate synthase (269 aa).

This sequence belongs to the TrpC family.

It catalyses the reaction 1-(2-carboxyphenylamino)-1-deoxy-D-ribulose 5-phosphate + H(+) = (1S,2R)-1-C-(indol-3-yl)glycerol 3-phosphate + CO2 + H2O. It participates in amino-acid biosynthesis; L-tryptophan biosynthesis; L-tryptophan from chorismate: step 4/5. The chain is Indole-3-glycerol phosphate synthase from Roseiflexus castenholzii (strain DSM 13941 / HLO8).